A 254-amino-acid polypeptide reads, in one-letter code: RING-H2 finger protein ATL28 (254 aa).

A helical membrane pass occupies residues 25 to 45 (VVLTGVLLFVIFAGFFSLFLW). The RING-type; atypical zinc finger occupies 103 to 145 (CAICLSEFSDEDTVRLITVCRHPFHSNCIDLWFELHKTCPVCR).

This sequence belongs to the RING-type zinc finger family. ATL subfamily.

It is found in the membrane. It catalyses the reaction S-ubiquitinyl-[E2 ubiquitin-conjugating enzyme]-L-cysteine + [acceptor protein]-L-lysine = [E2 ubiquitin-conjugating enzyme]-L-cysteine + N(6)-ubiquitinyl-[acceptor protein]-L-lysine.. It functions in the pathway protein modification; protein ubiquitination. The polypeptide is RING-H2 finger protein ATL28 (ATL28) (Arabidopsis thaliana (Mouse-ear cress)).